A 211-amino-acid polypeptide reads, in one-letter code: Large ribosomal subunit protein bL17c (211 aa).

The N-terminal 95 residues, 1–95 (MAIPMSMAMA…IVDGGGRIYA (95 aa)), are a transit peptide targeting the chloroplast.

This sequence belongs to the bacterial ribosomal protein bL17 family. As to quaternary structure, part of the 50S ribosomal subunit.

The protein resides in the plastid. It localises to the chloroplast. In terms of biological role, this protein binds directly to 23S ribosomal RNA. The polypeptide is Large ribosomal subunit protein bL17c (RPL17) (Arabidopsis thaliana (Mouse-ear cress)).